Reading from the N-terminus, the 235-residue chain is Probable GTP-binding protein EngB (235 aa).

One can recognise an EngB-type G domain in the interval 23–219; that stretch reads QVPEIAFAGR…NDKIIELLGL (197 aa). GTP contacts are provided by residues 31–38, 58–62, 92–95, 159–162, and 193–200; these read GRSNAGKS, GRTQH, DLPG, TKSD, and FTAQMFSA. Mg(2+) contacts are provided by serine 38 and threonine 60.

It belongs to the TRAFAC class TrmE-Era-EngA-EngB-Septin-like GTPase superfamily. EngB GTPase family. It depends on Mg(2+) as a cofactor.

In terms of biological role, necessary for normal cell division and for the maintenance of normal septation. The polypeptide is Probable GTP-binding protein EngB (Janthinobacterium sp. (strain Marseille) (Minibacterium massiliensis)).